The primary structure comprises 862 residues: MNMAIQTIKYIFWLLPILGLTQALLQNPGDDFPFSTVIDILSENVEFSTFLRIIQKTGHVQYLNELQNFTLFAPINSAFIKGDQTTDQFEEHFHIEDFLIHDRVLQVRDLENGTYLEKRAAKAPLLLRKHERHCFVNEIAVVEPDLLPSFQNASLQGINNLLLIQPQINELLVQLDEETQDLKIFSDFISSFSNYNAYTNSSTVLVPLDVNFRKFFNTIEINYLLDKYNKLGKSNTISQAKWAADRTSLLQELIIDDVYGGILPKELILENKNNRKLFMKSNSEGTSVSVNNSDYSPISNRIFEIGVVHGFSDLDFLRTHIQFDAEKYLHGLNCSEFVKELYFRDLEKFIQNGRKITIFVPQASFNEDRGYTKPSLLYHFVEGKIDLEQDFSSLRPIQYAPTQIYDSAFCSSAKRLGGHCQKFKITRSNKGYYINGRFKILNTKPYEIGNTSIYSIDDDLQLPGDLVLSLAPENHCSISLMLLKELNLLDLPSNHKGYTILLPCMNSWDNNDLTIDYLRSNKTALNLLMRNLIFEDLIYSNNYSISTTVKNLYGNSVSIGVQKIVGSQNLTKISVSTIKESIIIEESSDIFFNQGVIHPIDQLDFPVDLEISLKELIETTGTKEIFDFFNLFYDLSSIIWNNEEYSLLVPTASSIPLSGITANSTNLRKFLELHLIPANVTQNLLDCNGSISTKLGTKLNCRKDHLDNVFVSIQGDWTKEVRVLKTGCTTNLKSSCIFLIDKPISLSWLNSEKYHLRLPGIAVGFGVIIGVTIAISLLFCIIITRGGKVKDKNQRGRNDRATTPLIQHSPIIHNPSYSATAHLSPLSQPTFEGSYSVNAIQTPRDIRRVGSDQKGGRSVSTS.

An N-terminal signal peptide occupies residues 1–23 (MNMAIQTIKYIFWLLPILGLTQA). The Vacuolar portion of the chain corresponds to 24-762 (LLQNPGDDFP…KYHLRLPGIA (739 aa)). Residues 34–162 (FSTVIDILSE…ASLQGINNLL (129 aa)) form the FAS1 1 domain. 13 N-linked (GlcNAc...) asparagine glycosylation sites follow: Asn68, Asn112, Asn152, Asn200, Asn291, Asn333, Asn450, Asn521, Asn542, Asn569, Asn663, Asn679, and Asn688. 2 FAS1 domains span residues 463–604 (PGDL…DQLD) and 606–744 (PVDL…DKPI). A helical membrane pass occupies residues 763 to 783 (VGFGVIIGVTIAISLLFCIII). At 784-862 (TRGGKVKDKN…QKGGRSVSTS (79 aa)) the chain is on the cytoplasmic side.

It is found in the vacuole membrane. This chain is FAS1 domain-containing protein YLR001C, found in Saccharomyces cerevisiae (strain ATCC 204508 / S288c) (Baker's yeast).